The sequence spans 257 residues: Dihydroorotate dehydrogenase B (NAD(+)), electron transfer subunit (257 aa).

Residues 2 to 100 (ILIEDLTVVS…MGPQGNGFDI (99 aa)) form the FAD-binding FR-type domain. Residues 51–54 (RPIS), 68–70 (VYR), and 75–76 (GT) each bind FAD. Residues cysteine 220, cysteine 225, cysteine 228, and cysteine 244 each contribute to the [2Fe-2S] cluster site.

Belongs to the PyrK family. In terms of assembly, heterotetramer of 2 PyrK and 2 PyrD type B subunits. [2Fe-2S] cluster serves as cofactor. Requires FAD as cofactor.

The protein operates within pyrimidine metabolism; UMP biosynthesis via de novo pathway; orotate from (S)-dihydroorotate (NAD(+) route): step 1/1. Functionally, responsible for channeling the electrons from the oxidation of dihydroorotate from the FMN redox center in the PyrD type B subunit to the ultimate electron acceptor NAD(+). In Streptococcus thermophilus (strain ATCC BAA-491 / LMD-9), this protein is Dihydroorotate dehydrogenase B (NAD(+)), electron transfer subunit.